A 425-amino-acid polypeptide reads, in one-letter code: Oxytetracycline polyketide putative beta-ketoacyl synthase 1 (425 aa).

The Ketosynthase family 3 (KS3) domain occupies 7 to 420 (ARRVVITGIG…GFQSAIVLTE (414 aa)). Catalysis depends on for beta-ketoacyl synthase activity residues cysteine 173, histidine 313, and histidine 350.

Belongs to the thiolase-like superfamily. Beta-ketoacyl-ACP synthases family.

It functions in the pathway antibiotic biosynthesis; oxytetracycline biosynthesis. This chain is Oxytetracycline polyketide putative beta-ketoacyl synthase 1, found in Streptomyces rimosus.